Consider the following 217-residue polypeptide: Aminopyrimidine aminohydrolase (217 aa).

Asp44 lines the substrate pocket. Cys135 (nucleophile) is an active-site residue. The substrate site is built by Tyr139 and Tyr165. The active-site Proton donor is the Glu207.

It belongs to the TenA family. Homotetramer.

The catalysed reaction is 4-amino-5-aminomethyl-2-methylpyrimidine + H2O = 4-amino-5-hydroxymethyl-2-methylpyrimidine + NH4(+). It participates in cofactor biosynthesis; thiamine diphosphate biosynthesis. Catalyzes an amino-pyrimidine hydrolysis reaction at the C5' of the pyrimidine moiety of thiamine compounds to give a hydroxymethylpyrimidine (HMP). Displays low activity on 4-amino-5-aminomethyl-2-methylpyrimidine as substrate, indicating that the enzyme may act on a different HMP precursor that may derive from the human stomach food assumption or processing. Is probably involved in thiamine biosynthesis. Does not display thiaminase II activity, as it is unable to hydrolyze thiamine. In Helicobacter pylori (Campylobacter pylori), this protein is Aminopyrimidine aminohydrolase.